The chain runs to 145 residues: MFSPTSRLRSATADTFALVVYCFIIGMAIEIMLSGMSFEQSLSSRLLSIPVNIAIAWPYGLYRDRVLNMAKRHGGDHFLVRSVADLFAYVSFQSPVYAAILWVIGASSAQILTAVTSNLVISMVMGVTYGYFLEYCRRLFRVALP.

The next 4 helical transmembrane spans lie at 16 to 36 (FALV…LSGM), 42 to 62 (LSSR…YGLY), 86 to 106 (LFAY…VIGA), and 111 to 131 (ILTA…TYGY).

The protein belongs to the AlaE exporter family.

The protein localises to the cell inner membrane. Its function is as follows. Exports L-alanine. The chain is L-alanine exporter AlaE from Pectobacterium parmentieri (strain WPP163) (Pectobacterium wasabiae (strain WPP163)).